The following is a 354-amino-acid chain: Uroporphyrinogen decarboxylase (354 aa).

Substrate contacts are provided by residues 27–31 (RQAGR), phenylalanine 46, aspartate 77, tyrosine 153, threonine 208, and histidine 326.

Belongs to the uroporphyrinogen decarboxylase family. In terms of assembly, homodimer.

It localises to the cytoplasm. The enzyme catalyses uroporphyrinogen III + 4 H(+) = coproporphyrinogen III + 4 CO2. It participates in porphyrin-containing compound metabolism; protoporphyrin-IX biosynthesis; coproporphyrinogen-III from 5-aminolevulinate: step 4/4. Functionally, catalyzes the decarboxylation of four acetate groups of uroporphyrinogen-III to yield coproporphyrinogen-III. This chain is Uroporphyrinogen decarboxylase, found in Neisseria meningitidis serogroup A / serotype 4A (strain DSM 15465 / Z2491).